A 562-amino-acid chain; its full sequence is SPI-1 type 3 secretion system secretin (562 aa).

An N-terminal signal peptide occupies residues 1 to 24 (MKTHILLARVLACAALVLVTPGYS).

Belongs to the bacterial secretin family. T3SS SctC subfamily. In terms of assembly, the core secretion machinery of the T3SS is composed of approximately 20 different proteins, including cytoplasmic components, a base, an export apparatus and a needle. This subunit is part of the base, which anchors the injectisome in the bacterial cell envelope. Forms a stable homooligomeric complex. The complex is composed of 15 subunits.

It is found in the cell outer membrane. Its function is as follows. Component of the type III secretion system (T3SS), also called injectisome, which is used to inject bacterial effector proteins into eukaryotic host cells. Forms a ring-shaped multimeric structure with an apparent central pore in the outer membrane. The sequence is that of SPI-1 type 3 secretion system secretin from Salmonella typhimurium (strain LT2 / SGSC1412 / ATCC 700720).